We begin with the raw amino-acid sequence, 164 residues long: Large ribosomal subunit protein bL9 (164 aa).

It belongs to the bacterial ribosomal protein bL9 family.

Functionally, binds to the 23S rRNA. The chain is Large ribosomal subunit protein bL9 from Borrelia recurrentis (strain A1).